A 396-amino-acid polypeptide reads, in one-letter code: 1-deoxy-D-xylulose 5-phosphate reductoisomerase (396 aa).

NADPH is bound by residues Thr13, Gly14, Ser15, Ile16, and Asn127. Position 128 (Lys128) interacts with 1-deoxy-D-xylulose 5-phosphate. Residue Glu129 coordinates NADPH. Asp153 contributes to the Mn(2+) binding site. The 1-deoxy-D-xylulose 5-phosphate site is built by Ser154, Glu155, Ser184, and His207. Glu155 provides a ligand contact to Mn(2+). Gly213 provides a ligand contact to NADPH. Residues Ser220, Asn225, Lys226, and Glu229 each coordinate 1-deoxy-D-xylulose 5-phosphate. Glu229 contacts Mn(2+).

Belongs to the DXR family. Mg(2+) serves as cofactor. Requires Mn(2+) as cofactor.

The catalysed reaction is 2-C-methyl-D-erythritol 4-phosphate + NADP(+) = 1-deoxy-D-xylulose 5-phosphate + NADPH + H(+). The protein operates within isoprenoid biosynthesis; isopentenyl diphosphate biosynthesis via DXP pathway; isopentenyl diphosphate from 1-deoxy-D-xylulose 5-phosphate: step 1/6. In terms of biological role, catalyzes the NADPH-dependent rearrangement and reduction of 1-deoxy-D-xylulose-5-phosphate (DXP) to 2-C-methyl-D-erythritol 4-phosphate (MEP). The protein is 1-deoxy-D-xylulose 5-phosphate reductoisomerase of Pseudomonas syringae pv. syringae (strain B728a).